Reading from the N-terminus, the 391-residue chain is Na(+)/H(+) antiporter NhaA (391 aa).

11 helical membrane passes run 14–34 (AGGI…NSPL), 59–79 (LIHW…GLEV), 95–115 (SLPT…YLIF), 124–144 (VGWA…MALL), 154–174 (VFLL…IAMF), 177–197 (TDLS…LVGL), 213–233 (LILW…GVII), 261–281 (FVIL…GMSL), 292–312 (IALG…FVAV), 331–351 (VAVM…LAFI), and 363–383 (LGIL…LSKV).

It belongs to the NhaA Na(+)/H(+) (TC 2.A.33) antiporter family.

The protein resides in the cell inner membrane. It carries out the reaction Na(+)(in) + 2 H(+)(out) = Na(+)(out) + 2 H(+)(in). In terms of biological role, na(+)/H(+) antiporter that extrudes sodium in exchange for external protons. The polypeptide is Na(+)/H(+) antiporter NhaA (Shewanella loihica (strain ATCC BAA-1088 / PV-4)).